We begin with the raw amino-acid sequence, 405 residues long: 8-amino-7-oxononanoate synthase 2 (405 aa).

Arg-20 lines the substrate pocket. 116–117 (GY) contacts pyridoxal 5'-phosphate. A substrate-binding site is contributed by His-141. Pyridoxal 5'-phosphate is bound by residues Ser-187, His-215, and Thr-243. Lys-246 is modified (N6-(pyridoxal phosphate)lysine). Position 369 (Thr-369) interacts with substrate.

The protein belongs to the class-II pyridoxal-phosphate-dependent aminotransferase family. BioF subfamily. In terms of assembly, homodimer. The cofactor is pyridoxal 5'-phosphate.

The catalysed reaction is 6-carboxyhexanoyl-[ACP] + L-alanine + H(+) = (8S)-8-amino-7-oxononanoate + holo-[ACP] + CO2. The protein operates within cofactor biosynthesis; biotin biosynthesis. Catalyzes the decarboxylative condensation of pimeloyl-[acyl-carrier protein] and L-alanine to produce 8-amino-7-oxononanoate (AON), [acyl-carrier protein], and carbon dioxide. This chain is 8-amino-7-oxononanoate synthase 2, found in Polaromonas sp. (strain JS666 / ATCC BAA-500).